The chain runs to 412 residues: uncharacterized protein (412 aa).

Residues C62, C68, C71, and C143 each coordinate [4Fe-4S] cluster. Positions 243, 270, 290, and 338 each coordinate S-adenosyl-L-methionine. C364 functions as the Nucleophile in the catalytic mechanism.

This sequence belongs to the class I-like SAM-binding methyltransferase superfamily. RNA M5U methyltransferase family.

This is an uncharacterized protein from Mesorhizobium japonicum (strain LMG 29417 / CECT 9101 / MAFF 303099) (Mesorhizobium loti (strain MAFF 303099)).